The sequence spans 738 residues: DNA topoisomerase 4 subunit A (738 aa).

Positions 32–496 constitute a Topo IIA-type catalytic domain; that stretch reads LPDVRDGLKP…SFEEVTLTNQ (465 aa). Catalysis depends on Tyr120, which acts as the O-(5'-phospho-DNA)-tyrosine intermediate.

It belongs to the type II topoisomerase GyrA/ParC subunit family. ParC type 1 subfamily. As to quaternary structure, heterotetramer composed of ParC and ParE.

The protein localises to the cell membrane. The enzyme catalyses ATP-dependent breakage, passage and rejoining of double-stranded DNA.. In terms of biological role, topoisomerase IV is essential for chromosome segregation. It relaxes supercoiled DNA. Performs the decatenation events required during the replication of a circular DNA molecule. This is DNA topoisomerase 4 subunit A from Rickettsia conorii (strain ATCC VR-613 / Malish 7).